The primary structure comprises 158 residues: Transcriptional repressor NrdR (158 aa).

A disordered region spans residues 1–22 (MRCPFCGSDDTQVKDSRPAEDN). A zinc finger spans residues 3-34 (CPFCGSDDTQVKDSRPAEDNSAIRRRRICPDC). Residues 11–22 (TQVKDSRPAEDN) are compositionally biased toward basic and acidic residues. The ATP-cone domain maps to 49–139 (LTVLKKTGRK…VYRDFSHAED (91 aa)).

It belongs to the NrdR family. Zn(2+) serves as cofactor.

In terms of biological role, negatively regulates transcription of bacterial ribonucleotide reductase nrd genes and operons by binding to NrdR-boxes. The chain is Transcriptional repressor NrdR from Allorhizobium ampelinum (strain ATCC BAA-846 / DSM 112012 / S4) (Agrobacterium vitis (strain S4)).